Reading from the N-terminus, the 191-residue chain is Probable DNA-directed RNA polymerase subunit delta (191 aa).

Residues 14–83 form the HTH HARE-type domain; sequence LSMIEVARAI…GENKWGLRSW (70 aa). The interval 119–191 is disordered; the sequence is EDAIDYRDDD…EDEEDEEPVL (73 aa).

RNAP is composed of a core of 2 alpha, a beta and a beta' subunits. The core is associated with a delta subunit and one of several sigma factors.

Its function is as follows. Participates in both the initiation and recycling phases of transcription. In the presence of the delta subunit, RNAP displays an increased specificity of transcription, a decreased affinity for nucleic acids, and an increased efficiency of RNA synthesis because of enhanced recycling. This is Probable DNA-directed RNA polymerase subunit delta from Streptococcus pyogenes serotype M6 (strain ATCC BAA-946 / MGAS10394).